Here is a 469-residue protein sequence, read N- to C-terminus: Uronate isomerase (469 aa).

Belongs to the metallo-dependent hydrolases superfamily. Uronate isomerase family.

It carries out the reaction D-glucuronate = D-fructuronate. It catalyses the reaction aldehydo-D-galacturonate = keto-D-tagaturonate. It participates in carbohydrate metabolism; pentose and glucuronate interconversion. This is Uronate isomerase from Edwardsiella ictaluri (strain 93-146).